The primary structure comprises 35 residues: uncharacterized protein (35 aa).

Positions 1-25 are cleaved as a signal peptide; that stretch reads MTERKLLQLLRRPFISLSLFTALRA.

This is an uncharacterized protein from Saccharomyces cerevisiae (strain ATCC 204508 / S288c) (Baker's yeast).